The following is a 110-amino-acid chain: UPF0060 membrane protein PFL_4337 (110 aa).

Transmembrane regions (helical) follow at residues leucine 5–leucine 25, alanine 31–valine 51, alanine 59–glutamate 79, and leucine 84–glycine 104.

It belongs to the UPF0060 family.

The protein localises to the cell inner membrane. The chain is UPF0060 membrane protein PFL_4337 from Pseudomonas fluorescens (strain ATCC BAA-477 / NRRL B-23932 / Pf-5).